The chain runs to 315 residues: Malate dehydrogenase (315 aa).

Residues 11–16 (GAGHVG) and D35 contribute to the NAD(+) site. Positions 84 and 90 each coordinate substrate. NAD(+) contacts are provided by residues N97 and 120 to 122 (VTN). Positions 122 and 153 each coordinate substrate. Residue H177 is the Proton acceptor of the active site.

It belongs to the LDH/MDH superfamily. MDH type 3 family.

It carries out the reaction (S)-malate + NAD(+) = oxaloacetate + NADH + H(+). Its function is as follows. Catalyzes the reversible oxidation of malate to oxaloacetate. The protein is Malate dehydrogenase of Thermosulfidibacter takaii (strain DSM 17441 / JCM 13301 / NBRC 103674 / ABI70S6).